Reading from the N-terminus, the 377-residue chain is 8-amino-7-oxononanoate synthase (377 aa).

Residue Arg13 coordinates substrate. Gly100–Tyr101 lines the pyridoxal 5'-phosphate pocket. His125 is a substrate binding site. Pyridoxal 5'-phosphate is bound by residues Ser171, His199, and Thr228. Lys231 is subject to N6-(pyridoxal phosphate)lysine. Substrate is bound at residue Thr345.

The protein belongs to the class-II pyridoxal-phosphate-dependent aminotransferase family. BioF subfamily. As to quaternary structure, homodimer. Pyridoxal 5'-phosphate is required as a cofactor.

The catalysed reaction is 6-carboxyhexanoyl-[ACP] + L-alanine + H(+) = (8S)-8-amino-7-oxononanoate + holo-[ACP] + CO2. It participates in cofactor biosynthesis; biotin biosynthesis. Functionally, catalyzes the decarboxylative condensation of pimeloyl-[acyl-carrier protein] and L-alanine to produce 8-amino-7-oxononanoate (AON), [acyl-carrier protein], and carbon dioxide. The protein is 8-amino-7-oxononanoate synthase of Nitrosococcus oceani (strain ATCC 19707 / BCRC 17464 / JCM 30415 / NCIMB 11848 / C-107).